The sequence spans 316 residues: MQEFSLWCDFIERDFLENDFLKLINKGAICGATSNPSLFCEAITKSAFYKDEIAKLKGKKAKEIYETLALKDILQASSALMPLYEKDPNNGYISLEIDPFLEDDAPKSIDEAKRLFKTLNRPNVMIKVPASESGLEVVSALTKASIPVNATLVFSPKIARKTAQILAKEAQKRAVISVFVSRFDKEIDPLVPKNLQAKSGIINATECYYQINQHANKLTSALFASTGVKSNTLAKGYYIKALCFKNSINTAPLEALNAYLLDPNTEYQTPLKITEIEAFKKELKACNIDLENTAQKLLKEGLIAFKQSFEKLLSSF.

The active-site Schiff-base intermediate with substrate is K127.

This sequence belongs to the transaldolase family. Type 2 subfamily.

The protein localises to the cytoplasm. The catalysed reaction is D-sedoheptulose 7-phosphate + D-glyceraldehyde 3-phosphate = D-erythrose 4-phosphate + beta-D-fructose 6-phosphate. Its pathway is carbohydrate degradation; pentose phosphate pathway; D-glyceraldehyde 3-phosphate and beta-D-fructose 6-phosphate from D-ribose 5-phosphate and D-xylulose 5-phosphate (non-oxidative stage): step 2/3. In terms of biological role, transaldolase is important for the balance of metabolites in the pentose-phosphate pathway. The polypeptide is Transaldolase (Helicobacter pylori (strain Shi470)).